Here is a 92-residue protein sequence, read N- to C-terminus: Protein S100-B (92 aa).

An N-acetylserine modification is found at serine 2. EF-hand domains follow at residues 13–48 (DVFHQYSGREGDKHKLKKSELKELINNELSHFLEEI) and 49–84 (KEQEVVDKVMETLDEDGDGECDFQEFMAFVAMVTTA). Histidine 16 lines the Zn(2+) pocket. The Ca(2+) site is built by serine 19, glutamate 22, and aspartate 24. Position 26 (histidine 26) interacts with Zn(2+). Residues aspartate 62, aspartate 64, aspartate 66, glutamate 68, and glutamate 73 each contribute to the Ca(2+) site. Positions 86 and 91 each coordinate Zn(2+).

This sequence belongs to the S-100 family. Dimer of either two alpha chains, or two beta chains, or one alpha and one beta chain. The S100B dimer binds two molecules of STK38. Interacts with CACYBP in a calcium-dependent manner. Interacts with ATAD3A; this interaction probably occurs in the cytosol prior to ATAD3A mitochondrial targeting. Interacts with S100A6. The S100B dimer interacts with two molecules of CAPZA1. Interacts with AGER. Interacts with PPP5C (via TPR repeats); the interaction is calcium-dependent and modulates PPP5C activity. Interacts with TPPP; this interaction inhibits TPPP dimerization. Interacts with isoform CLSTN3beta of CLSTN3; interaction promotes secretion.

Its subcellular location is the cytoplasm. The protein resides in the nucleus. It is found in the secreted. Functionally, small zinc- and- and calcium-binding protein that is highly expressed in astrocytes and constitutes one of the most abundant soluble proteins in brain. Weakly binds calcium but binds zinc very tightly-distinct binding sites with different affinities exist for both ions on each monomer. Physiological concentrations of potassium ion antagonize the binding of both divalent cations, especially affecting high-affinity calcium-binding sites. Acts as a neurotrophic factor that promotes astrocytosis and axonal proliferation. Involved in innervation of thermogenic adipose tissue by acting as an adipocyte-derived neurotrophic factor that promotes sympathetic innervation of adipose tissue. Binds to and initiates the activation of STK38 by releasing autoinhibitory intramolecular interactions within the kinase. Interaction with AGER after myocardial infarction may play a role in myocyte apoptosis by activating ERK1/2 and p53/TP53 signaling. Could assist ATAD3A cytoplasmic processing, preventing aggregation and favoring mitochondrial localization. May mediate calcium-dependent regulation on many physiological processes by interacting with other proteins, such as TPR-containing proteins, and modulating their activity. This Mus musculus (Mouse) protein is Protein S100-B.